A 183-amino-acid polypeptide reads, in one-letter code: Ribulose bisphosphate carboxylase small subunit, chloroplastic 7 (183 aa).

The N-terminal 43 residues, 1–43 (MAAAMMNKTVVVGKESVKGGVAPKVAMSRGGFLNSGIMKKDRD), are a transit peptide targeting the chloroplast.

Belongs to the RuBisCO small chain family. As to quaternary structure, heterohexadecamer of 8 large and 8 small subunits.

The protein resides in the plastid. It is found in the chloroplast. Its function is as follows. RuBisCO catalyzes two reactions: the carboxylation of D-ribulose 1,5-bisphosphate, the primary event in carbon dioxide fixation, as well as the oxidative fragmentation of the pentose substrate. Both reactions occur simultaneously and in competition at the same active site. Although the small subunit is not catalytic it is essential for maximal activity. The chain is Ribulose bisphosphate carboxylase small subunit, chloroplastic 7 from Acetabularia peniculus (Green alga).